Consider the following 403-residue polypeptide: Putative queuine tRNA-ribosyltransferase (403 aa).

Residue Asp-91 is the Proton acceptor of the active site. Substrate is bound by residues 91–95 (DSGGF), Asp-177, Gln-218, and Gly-245. An RNA binding region spans residues 275-281 (GIGAIED). Asp-294 acts as the Nucleophile in catalysis. The segment at 299 to 303 (ARWAR) is RNA binding; important for wobble base 34 recognition. Cys-341, Cys-343, Cys-346, and His-372 together coordinate Zn(2+).

This sequence belongs to the queuine tRNA-ribosyltransferase family. Homodimer. Within each dimer, one monomer is responsible for RNA recognition and catalysis, while the other monomer binds to the replacement base PreQ1. It depends on Zn(2+) as a cofactor.

The catalysed reaction is 7-aminomethyl-7-carbaguanine + guanosine(34) in tRNA = 7-aminomethyl-7-carbaguanosine(34) in tRNA + guanine. In terms of biological role, catalyzes the base-exchange of a guanine (G) residue with the queuine precursor 7-aminomethyl-7-deazaguanine (PreQ1) at position 34 (anticodon wobble position) in tRNAs with GU(N) anticodons (tRNA-Asp, -Asn, -His and -Tyr). Catalysis occurs through a double-displacement mechanism. The nucleophile active site attacks the C1' of nucleotide 34 to detach the guanine base from the RNA, forming a covalent enzyme-RNA intermediate. The proton acceptor active site deprotonates the incoming PreQ1, allowing a nucleophilic attack on the C1' of the ribose to form the product. After dissociation, two additional enzymatic reactions on the tRNA convert PreQ1 to queuine (Q), resulting in the hypermodified nucleoside queuosine (7-(((4,5-cis-dihydroxy-2-cyclopenten-1-yl)amino)methyl)-7-deazaguanosine). The sequence is that of Putative queuine tRNA-ribosyltransferase from Archaeoglobus fulgidus (strain ATCC 49558 / DSM 4304 / JCM 9628 / NBRC 100126 / VC-16).